Reading from the N-terminus, the 191-residue chain is UPF0149 protein VV2847 (191 aa).

This sequence belongs to the UPF0149 family.

The sequence is that of UPF0149 protein VV2847 from Vibrio vulnificus (strain YJ016).